A 513-amino-acid chain; its full sequence is ATP synthase subunit alpha 2 (513 aa).

169–176 (GDRQTGKT) serves as a coordination point for ATP.

It belongs to the ATPase alpha/beta chains family. As to quaternary structure, F-type ATPases have 2 components, CF(1) - the catalytic core - and CF(0) - the membrane proton channel. CF(1) has five subunits: alpha(3), beta(3), gamma(1), delta(1), epsilon(1). CF(0) has three main subunits: a(1), b(2) and c(9-12). The alpha and beta chains form an alternating ring which encloses part of the gamma chain. CF(1) is attached to CF(0) by a central stalk formed by the gamma and epsilon chains, while a peripheral stalk is formed by the delta and b chains.

The protein localises to the cell inner membrane. The enzyme catalyses ATP + H2O + 4 H(+)(in) = ADP + phosphate + 5 H(+)(out). Functionally, produces ATP from ADP in the presence of a proton gradient across the membrane. The alpha chain is a regulatory subunit. This is ATP synthase subunit alpha 2 from Pseudoalteromonas atlantica (strain T6c / ATCC BAA-1087).